The sequence spans 469 residues: MFSEQAAQRAHTLLAPPSASNATFARVPVATYTNSSQPFRLGERSFNRQYAHIYATRLIQMRPFLVSRAQQHWGSRVEVKKLCELQPGEQCCVVGTLFKAMSLQPSILREISEEHNLVPQPPRSKYIHPDDELVLEDELQRIKLKGTIDVSKLVTGTVLAVLGSAKDDGRFQVEDHCFADLAPQKPVPPLDTDRFVLLVSGLGLGGGGGESLLGTQLLVDVVTGQLGDEGEQCSAAHVSRVILAGNLLSHNTQSRDSINKAKYLTKKTQAASVEAVKMLDEILLQLSASVPVDVMPGEFDPTNYTLPQQPLHPCMFPLATAYSTLQLVTNPYQATIDGVRFLGTSGQNVSDIFRYSSMEDHLEILEWTLRVRHISPTAPDTLGCYPFYKTDPFIFPECPHVYFCGNTPSFGSKIIRGPEDQVVLLVAVPDFSSTQTACLVNLRSLACQPISFAGFGAEQEDLEGLGLGP.

Methionine 1 carries the N-acetylmethionine modification. Serine 257 is modified (phosphoserine).

Belongs to the DNA polymerase delta/II small subunit family. As to quaternary structure, component of both the DNA polymerase delta and DNA polymerase zeta complexes. Component of the tetrameric DNA polymerase delta complex (Pol-delta4), which consists of POLD1/p125, POLD2/p50, POLD3/p66/p68 and POLD4/p12, with POLD1 bearing DNA polymerase and 3' to 5' proofreading exonuclease activities. Within Pol-delta4, directly interacts with POLD1, POLD3 and POLD4. Following stress caused by DNA damaging agents or by replication stress, POLD4 is degraded and Pol-delta4 is converted into a trimeric form of the complex (Pol-delta3), which consists of POLD1, POLD2 and POLD3. Pol-delta3 is the major form occurring at S phase replication sites, as well as DNA damage sites. Also observed as a dimeric complex with POLD2 (Pol-delta2 complex). Pol-delta2 is relatively insensitive to the PCNA stimulation (2-5-fold) compared to Pol-delta4 that is stimulated by over 50-fold. Contrary to the other components of Pol-delta4, does not directly interact with PCNA. As POLD1 and POLD4, directly interacts with WRNIP1; this interaction stimulates DNA polymerase delta-mediated DNA synthesis, independently of the presence of PCNA. This stimulation may be due predominantly to an increase of initiation frequency and also to increased processivity. Directly interacts with POLDIP2 and POLDIP3. Directly interacts with KCTD13/PDIP1; in the presence of PCNA, this interaction may stimulate DNA polymerase activity. Component of the tetrameric Pol-zeta complex (Pol-zeta4), which consists of REV3L, MAD2L2, POLD2 and POLD3, with REV3L bearing DNA polymerase catalytic activity. Interacts with KCTD10.

It is found in the nucleus. Accessory component of both the DNA polymerase delta complex and the DNA polymerase zeta complex. As a component of the trimeric and tetrameric DNA polymerase delta complexes (Pol-delta3 and Pol-delta4, respectively), plays a role in high fidelity genome replication, including in lagging strand synthesis, and repair. Pol-delta3 and Pol-delta4 are characterized by the absence or the presence of POLD4. They exhibit differences in catalytic activity. Most notably, Pol-delta3 shows higher proofreading activity than Pol-delta4. Although both Pol-delta3 and Pol-delta4 process Okazaki fragments in vitro, Pol-delta3 may also be better suited to fulfill this task, exhibiting near-absence of strand displacement activity compared to Pol-delta4 and stalling on encounter with the 5'-blocking oligonucleotides. Pol-delta3 idling process may avoid the formation of a gap, while maintaining a nick that can be readily ligated. Along with DNA polymerase kappa, DNA polymerase delta carries out approximately half of nucleotide excision repair (NER) synthesis following UV irradiation. Under conditions of DNA replication stress, required for the repair of broken replication forks through break-induced replication (BIR). Involved in the translesion synthesis (TLS) of templates carrying O6-methylguanine or abasic sites performed by Pol-delta4, independently of DNA polymerase zeta (REV3L) or eta (POLH). Facilitates abasic site bypass by DNA polymerase delta by promoting extension from the nucleotide inserted opposite the lesion. Also involved in TLS as a component of the DNA polymerase zeta complex. Along with POLD3, dramatically increases the efficiency and processivity of DNA synthesis of the DNA polymerase zeta complex compared to the minimal zeta complex, consisting of only REV3L and REV7. This Mus musculus (Mouse) protein is DNA polymerase delta subunit 2 (Pold2).